The chain runs to 156 residues: Large ribosomal subunit protein eL29 (156 aa).

A compositionally biased stretch (basic residues) spans 1–26; it reads MAKSKNHTTHNQSRKWHRNGIKKPRS. Disordered regions lie at residues 1–35 and 116–156; these read MAKS…LKGV and RRLC…VKAP. An N6-methyllysine modification is found at lysine 5. Position 31 is a phosphoserine (serine 31). Lysine 33 bears the N6-acetyllysine mark. A run of 2 repeats spans residues 129 to 136 and 137 to 144. The tract at residues 129 to 144 is 2 X 8 AA tandem repeats of A-X-A-K-A-P-A-[KQ]; sequence AEAKAPAKAQAKAPAQ. Residues 134–156 are compositionally biased toward low complexity; sequence PAKAQAKAPAQAPKGAQAPVKAP.

Belongs to the eukaryotic ribosomal protein eL29 family. As to quaternary structure, component of the large ribosomal subunit.

The protein localises to the cytoplasm. Its function is as follows. Component of the large ribosomal subunit. The ribosome is a large ribonucleoprotein complex responsible for the synthesis of proteins in the cell. The sequence is that of Large ribosomal subunit protein eL29 (Rpl29) from Rattus norvegicus (Rat).